Here is a 515-residue protein sequence, read N- to C-terminus: Recombining binding protein suppressor of hairless-like protein (515 aa).

The segment at 1–40 (MDPRETTDPSLPPGPLTHLSLPDSSEVRLQSDGPSLLGSW) is disordered. DNA-binding stretches follow at residues 76–86 (QKSYGNEKRFF), 191–196 (SKPSQK), and 218–223 (RLRSQT). The IPT/TIG domain occupies 384-474 (PLISTLELSG…YPSPFSFTYT (91 aa)).

It belongs to the Su(H) family. As to quaternary structure, interacts weakly with EBNA2. Does not interact with any Notch proteins. In terms of tissue distribution, highly expressed in lung. Also detected in spleen, and brain.

The protein resides in the nucleus. Putative transcription factor, which cooperates with EBNA2 to activate transcription. This Mus musculus (Mouse) protein is Recombining binding protein suppressor of hairless-like protein (Rbpjl).